The sequence spans 78 residues: Mandibular organ-inhibiting hormone 2 (78 aa).

Cystine bridges form between Cys7–Cys44, Cys24–Cys40, and Cys27–Cys53.

Belongs to the arthropod CHH/MIH/GIH/VIH hormone family. In terms of tissue distribution, produced by the medulla terminalis X-organ in the eyestalks and transported to the sinus gland where it is stored and released.

It is found in the secreted. Represses the synthesis of methyl farnesoate, the precursor of insect juvenile hormone III in the mandibular organ. The polypeptide is Mandibular organ-inhibiting hormone 2 (Cancer pagurus (Rock crab)).